Reading from the N-terminus, the 199-residue chain is Recombination protein RecR (199 aa).

The segment at 57–72 (CSICGNITESDPCMIC) adopts a C4-type zinc-finger fold. In terms of domain architecture, Toprim spans 80–176 (SKVVVVEQPK…KVTRLAHGLA (97 aa)).

The protein belongs to the RecR family.

May play a role in DNA repair. It seems to be involved in an RecBC-independent recombinational process of DNA repair. It may act with RecF and RecO. This chain is Recombination protein RecR, found in Ligilactobacillus salivarius (strain UCC118) (Lactobacillus salivarius).